We begin with the raw amino-acid sequence, 877 residues long: Phosphoenolpyruvate carboxylase (877 aa).

Residues H138 and K543 contribute to the active site.

It belongs to the PEPCase type 1 family. Mg(2+) serves as cofactor.

The catalysed reaction is oxaloacetate + phosphate = phosphoenolpyruvate + hydrogencarbonate. In terms of biological role, forms oxaloacetate, a four-carbon dicarboxylic acid source for the tricarboxylic acid cycle. The chain is Phosphoenolpyruvate carboxylase from Aeromonas hydrophila subsp. hydrophila (strain ATCC 7966 / DSM 30187 / BCRC 13018 / CCUG 14551 / JCM 1027 / KCTC 2358 / NCIMB 9240 / NCTC 8049).